Here is a 309-residue protein sequence, read N- to C-terminus: Ribosomal RNA small subunit methyltransferase H (309 aa).

Residues 36–38, Asp56, Phe82, Asp103, and Gln110 contribute to the S-adenosyl-L-methionine site; that span reads GGH.

This sequence belongs to the methyltransferase superfamily. RsmH family.

The protein localises to the cytoplasm. The catalysed reaction is cytidine(1402) in 16S rRNA + S-adenosyl-L-methionine = N(4)-methylcytidine(1402) in 16S rRNA + S-adenosyl-L-homocysteine + H(+). Its function is as follows. Specifically methylates the N4 position of cytidine in position 1402 (C1402) of 16S rRNA. In Hahella chejuensis (strain KCTC 2396), this protein is Ribosomal RNA small subunit methyltransferase H.